A 70-amino-acid chain; its full sequence is uncharacterized protein (70 aa).

Residues 1 to 16 (MKLLLVLITLIIAALA) form the signal peptide.

This is an uncharacterized protein from Orgyia pseudotsugata (Douglas-fir tussock moth).